The sequence spans 1773 residues: Zinc finger CCCH domain-containing protein 19 (1773 aa).

The interval 145–166 (SGDRLEENKEVSMEEEPSSHEL) is disordered. A compositionally biased stretch (basic and acidic residues) spans 147 to 156 (DRLEENKEVS). Residues 196-218 (GEEIESDLESKKEKVDVIEEETT) are a coiled coil. 3 disordered regions span residues 270-290 (IGEGAKDLTDGDAKEGVDVTE), 361-409 (DVDK…AGQT), and 434-591 (ISEM…KTVK). 2 stretches are compositionally biased toward basic and acidic residues: residues 273–286 (GAKDLTDGDAKEGV) and 361–378 (DVDKDSEAGKSLDIHVPE). Residues 403–437 (AEEAGQTVDLEEIREENQELSKELAQVDETKISEM) adopt a coiled-coil conformation. Basic and acidic residues-rich tracts occupy residues 444–455 (MIKDEDQEKDDN) and 497–513 (KVDRTKIAEVSEETDTR). Acidic residues-rich tracts occupy residues 514 to 529 (IEDEDQEKDDEMTDVA) and 551 to 572 (EEMTETQEDSVMADEEPEEVEE). A compositionally biased stretch (basic residues) spans 578–588 (GGKRKRGRNTK). Positions 581 to 588 (RKRGRNTK) match the Nuclear localization signal 1 motif. The segment at 599-665 (EDVCFMCFDG…TYLCYTCMFS (67 aa)) adopts a PHD-type zinc-finger fold. Residues 741-751 (AKRPLKGHETN) show a composition bias toward basic and acidic residues. A disordered region spans residues 741-797 (AKRPLKGHETNASKQGTASETDYVTDGGSDSDSSPKKRKTRSRSKSGSAEKILSSGD). Over residues 752 to 762 (ASKQGTASETD) the composition is skewed to polar residues. Residues 801 to 884 (SDETMEWASK…LNLLDSHFLK (84 aa)) form the SWIB/MDM2 domain. Residues 903 to 919 (PNHVDVDENLDHPVKSG) are compositionally biased toward basic and acidic residues. Residues 903–935 (PNHVDVDENLDHPVKSGKDKKRKTRKKNVRKGR) form a disordered region. The segment covering 920–935 (KDKKRKTRKKNVRKGR) has biased composition (basic residues). Positions 921–928 (DKKRKTRK) match the Nuclear localization signal 2 motif. Residues 944 to 1076 (AVDMHNINLI…KAIALQEVRV (133 aa)) enclose the Plus3 domain. A compositionally biased stretch (basic and acidic residues) spans 1139–1152 (EEIPEIHADPKMDP). The disordered stretch occupies residues 1139-1274 (EEIPEIHADP…PETPARSSRA (136 aa)). Acidic residues predominate over residues 1153-1163 (DCESEDEDEKE). Residues 1193–1212 (FSSNESWTGTSNYSNTSANR) are compositionally biased toward polar residues. Phosphoserine is present on Ser1281. Residues 1307 to 1361 (EKIWHYKDPSGKVQGPFSMAQLRKWNNTGYFPAKLEIWKANESPLDSVLLTDALA) form the GYF domain. 4 stretches are compositionally biased toward polar residues: residues 1409–1433 (RNSQDTWSQGGSLPSPTPNQITTPT), 1441–1469 (SRWSPTKPSPQSANQSMNYSVAQSGQSQT), 1499–1509 (VSVNHSATLHS), and 1518–1528 (SWGSMQTDHGG). Disordered stretches follow at residues 1409 to 1469 (RNSQ…QSQT), 1485 to 1605 (QPQT…SWGQ), and 1649 to 1746 (GQTQ…QQNN). The span at 1529-1555 (SNTPSSQNNSTSYGTPSPSVLPSQSQP) shows a compositional bias: low complexity. The span at 1569-1579 (SQPNAQAQAQW) shows a compositional bias: polar residues. Composition is skewed to low complexity over residues 1585–1602 (NNNQNSAQPQAPANQNSS) and 1666–1677 (QSQSQSQVQAQA). The segment covering 1678–1708 (GTTGSGWMQPGQGIQSGNSNQNWGTQNQTAI) has biased composition (polar residues). Residues 1722 to 1735 (GNQQQSQNGDSGYG) are compositionally biased toward low complexity. Residues 1737–1746 (NRQSGGQQNN) show a composition bias toward polar residues. Residues 1747–1773 (FKGQRVCKFFRENGHCRKGASCNYLHN) form a C3H1-type zinc finger.

Interacts with unmethylated histone H3 and AGO2. The interaction with AGO2 in required to direct DNA methylation and silencing. In terms of tissue distribution, expressed in seedlings, mostly in the vasculature and shoot apices of young seedlings.

Its subcellular location is the nucleus. Functionally, plays a central role in integrating RNA silencing and chromatin signals in 21 nt siRNA-dependent DNA methylation on cytosine pathway leading to transcriptional gene silencing of specific sequences. Involved in a chromatin-based RNA silencing pathway that encompasses both post-transcriptional gene silencing (PTGS) (e.g. RDR1, RDR6 and AGO2) and transcriptional gene silencing (TGS) (e.g. siRNA-dependent DNA methylation and histone H3) components. Mediates siRNA accumulation at specific chromatin loci. Binds H3K4me0 through its PHD to enforce low levels of H3K4 methylation and gene silencing at a subset of genomic loci. The sequence is that of Zinc finger CCCH domain-containing protein 19 (NERD) from Arabidopsis thaliana (Mouse-ear cress).